The sequence spans 238 residues: Thrombin-like enzyme halystase (238 aa).

In terms of domain architecture, Peptidase S1 spans 1-229 (IIGGDECNIN…HLDWIKSIIA (229 aa)). 6 disulfides stabilise this stretch: cysteine 7–cysteine 141, cysteine 28–cysteine 44, cysteine 76–cysteine 236, cysteine 120–cysteine 190, cysteine 152–cysteine 169, and cysteine 180–cysteine 205. Histidine 43 (charge relay system) is an active-site residue. An N-linked (GlcNAc...) asparagine glycan is attached at asparagine 81. The Charge relay system role is filled by aspartate 88. The N-linked (GlcNAc...) asparagine glycan is linked to asparagine 100. The active-site Charge relay system is serine 184.

It belongs to the peptidase S1 family. Snake venom subfamily. Monomer. In terms of tissue distribution, expressed by the venom gland.

Its subcellular location is the secreted. With respect to regulation, inhibited by diisopropylfluorophosphate (DFP), PMSF and leupeptin. Its function is as follows. Thrombin-like snake venom serine protease. Cleaves fibrinogen (beta chain of fibrinogen (FGB) and more slowly alpha chain (FGA)) without inducing fibrin clotting and cleaves kininogen to produce bradykinin (KNG), resulting in the reduction of blood pressure. The chain is Thrombin-like enzyme halystase from Gloydius blomhoffii (Mamushi).